The primary structure comprises 255 residues: Accessory gland-specific peptide 26Aa (255 aa).

Residues 1–18 (MNQILLCSQILLLLFAVA) form the signal peptide. Residues 86–110 (PINNSKSRKNSSTLPSQILTDKPNQ) form a disordered region. The segment covering 87-110 (INNSKSRKNSSTLPSQILTDKPNQ) has biased composition (polar residues). 3 N-linked (GlcNAc...) asparagine glycosylation sites follow: Asn-88, Asn-95, and Asn-136. Disordered stretches follow at residues 177–197 (NAQNARKPTKSCKKRPSKDIA) and 235–255 (NNPATDVPTGKSPSEGNPSTT). The span at 183–192 (KPTKSCKKRP) shows a compositional bias: basic residues. Residues 245 to 255 (KSPSEGNPSTT) are compositionally biased toward polar residues.

It undergoes several cleavages as it is secreted and it is further processed in the recipient female. As to expression, main cells of the accessory glands of males.

Its subcellular location is the secreted. The protein localises to the extracellular space. In terms of biological role, this protein is transferred from male to female's hemolymph during mating, affecting egglaying and behavior after mating. The chain is Accessory gland-specific peptide 26Aa (Acp26Aa) from Drosophila simulans (Fruit fly).